The primary structure comprises 1335 residues: Restriction of telomere capping protein 1 (1335 aa).

Positions 1 to 39 (MSLSPHVENASIPKGSTPIPKNRNVSSIGKGEFLGSSSS) are disordered. WD repeat units lie at residues 207 to 248 (NKFS…SIDN), 256 to 296 (EHTR…SKSS), 305 to 342 (TASD…YKFA), 367 to 406 (AHTG…NAAE), 439 to 486 (NTGY…IPKH), and 489 to 527 (LSET…TVLE). Disordered regions lie at residues 559–593 (PELQ…IGGI), 600–619 (TGLT…GPTF), 630–651 (ASSF…ENRE), 736–758 (KNAT…DDDD), and 783–824 (NEKV…DRSR). Low complexity predominate over residues 630–644 (ASSFNSSSASLTSLT). Residues 808–817 (SSISSISASR) show a composition bias toward low complexity. The WD 7 repeat unit spans residues 844-884 (LISIATHNASVYLSIDDLTNFKIWILIRDSLLWDLKWMTSS). 2 disordered regions span residues 935-956 (AFRA…KLKE) and 1007-1037 (DEHE…KSIP). 2 stretches are compositionally biased toward basic and acidic residues: residues 945–956 (DAEKKPVSKLKE) and 1009–1021 (HEHQ…HDSP). 6 positions are modified to phosphoserine: S1030, S1074, S1081, S1083, S1117, and S1127. WD repeat units follow at residues 1130-1170 (REQL…TETG) and 1217-1256 (VLKY…KEKL). The RING-type; degenerate zinc finger occupies 1294–1335 (LKKLTMVILPCGHEGHFQCIQEWFLDENEQECPGGCPGVAFI).

This sequence belongs to the WD repeat RTC1 family.

The protein localises to the vacuole. Functionally, may be involved in a process influencing telomere capping. The sequence is that of Restriction of telomere capping protein 1 (RTC1) from Saccharomyces cerevisiae (strain YJM789) (Baker's yeast).